The primary structure comprises 431 residues: 3-phosphoshikimate 1-carboxyvinyltransferase (431 aa).

3-phosphoshikimate-binding residues include K21, S22, and R26. Phosphoenolpyruvate is bound at residue K21. Phosphoenolpyruvate is bound by residues G93 and R121. The 3-phosphoshikimate site is built by S166, Q168, D318, and K345. Q168 contacts phosphoenolpyruvate. The Proton acceptor role is filled by D318. Residues R349 and R391 each coordinate phosphoenolpyruvate.

The protein belongs to the EPSP synthase family. As to quaternary structure, monomer.

The protein localises to the cytoplasm. It carries out the reaction 3-phosphoshikimate + phosphoenolpyruvate = 5-O-(1-carboxyvinyl)-3-phosphoshikimate + phosphate. It functions in the pathway metabolic intermediate biosynthesis; chorismate biosynthesis; chorismate from D-erythrose 4-phosphate and phosphoenolpyruvate: step 6/7. Catalyzes the transfer of the enolpyruvyl moiety of phosphoenolpyruvate (PEP) to the 5-hydroxyl of shikimate-3-phosphate (S3P) to produce enolpyruvyl shikimate-3-phosphate and inorganic phosphate. The protein is 3-phosphoshikimate 1-carboxyvinyltransferase of Sulfurihydrogenibium sp. (strain YO3AOP1).